Reading from the N-terminus, the 404-residue chain is Proteasomal ubiquitin receptor ADRM1-A (404 aa).

Residues 17-130 (SSSKYLVEFR…RKLNEYLNNP (114 aa)) enclose the Pru domain. Low complexity predominate over residues 195–247 (GSGGPTTSSSSSSSRSQSAAVTPSSTTSSTRTTSAPVAPAAAPATTPSPAVSS). Disordered regions lie at residues 195-258 (GSGG…TSPT) and 376-404 (FAKA…MSLD). Polar residues predominate over residues 248 to 258 (NDGASEATSPT). The DEUBAD domain maps to 278–390 (TGEGGQQVDL…QSTSSQKERE (113 aa)). The segment covering 386–395 (QKERESSEKK) has biased composition (basic and acidic residues).

The protein belongs to the ADRM1 family. As to quaternary structure, component of the 19S proteasome regulatory particle complex. The 26S proteasome consists of a 20S core particle (CP) and two 19S regulatory subunits (RP).

It is found in the cytoplasm. It localises to the nucleus. In terms of biological role, component of the 26S proteasome, a multiprotein complex involved in the ATP-dependent degradation of ubiquitinated proteins. This complex plays a key role in the maintenance of protein homeostasis by removing misfolded or damaged proteins, which could impair cellular functions, and by removing proteins whose functions are no longer required. Therefore, the proteasome participates in numerous cellular processes, including cell cycle progression, apoptosis, or DNA damage repair. Within the complex, functions as a proteasomal ubiquitin receptor. This Xenopus laevis (African clawed frog) protein is Proteasomal ubiquitin receptor ADRM1-A (adrm1-a).